Consider the following 231-residue polypeptide: 7-cyano-7-deazaguanine synthase (231 aa).

8 to 18 (FSGGQDSTTCL) provides a ligand contact to ATP. Zn(2+) is bound by residues Cys188, Cys197, Cys200, and Cys203.

The protein belongs to the QueC family. Zn(2+) is required as a cofactor.

It carries out the reaction 7-carboxy-7-deazaguanine + NH4(+) + ATP = 7-cyano-7-deazaguanine + ADP + phosphate + H2O + H(+). It participates in purine metabolism; 7-cyano-7-deazaguanine biosynthesis. In terms of biological role, catalyzes the ATP-dependent conversion of 7-carboxy-7-deazaguanine (CDG) to 7-cyano-7-deazaguanine (preQ(0)). The sequence is that of 7-cyano-7-deazaguanine synthase from Salmonella gallinarum (strain 287/91 / NCTC 13346).